The following is a 568-amino-acid chain: Urease subunit alpha (568 aa).

The Urease domain maps to 130-568 (GGIDSHIHFI…LPMAQRYFLF (439 aa)). The Ni(2+) site is built by His-135, His-137, and Lys-218. Lys-218 is subject to N6-carboxylysine. Position 220 (His-220) interacts with substrate. Residues His-247 and His-273 each coordinate Ni(2+). His-321 functions as the Proton donor in the catalytic mechanism. Asp-361 provides a ligand contact to Ni(2+).

The protein belongs to the metallo-dependent hydrolases superfamily. Urease alpha subunit family. Heterotrimer of UreA (gamma), UreB (beta) and UreC (alpha) subunits. Three heterotrimers associate to form the active enzyme. The cofactor is Ni cation. Post-translationally, carboxylation allows a single lysine to coordinate two nickel ions.

The protein resides in the cytoplasm. It catalyses the reaction urea + 2 H2O + H(+) = hydrogencarbonate + 2 NH4(+). It functions in the pathway nitrogen metabolism; urea degradation; CO(2) and NH(3) from urea (urease route): step 1/1. The chain is Urease subunit alpha from Nitrosospira multiformis (strain ATCC 25196 / NCIMB 11849 / C 71).